A 258-amino-acid polypeptide reads, in one-letter code: Trans-aconitate 2-methyltransferase (258 aa).

It belongs to the methyltransferase superfamily. Tam family.

It localises to the cytoplasm. It catalyses the reaction trans-aconitate + S-adenosyl-L-methionine = (E)-3-(methoxycarbonyl)pent-2-enedioate + S-adenosyl-L-homocysteine. In terms of biological role, catalyzes the S-adenosylmethionine monomethyl esterification of trans-aconitate. In Methylobacterium nodulans (strain LMG 21967 / CNCM I-2342 / ORS 2060), this protein is Trans-aconitate 2-methyltransferase.